A 472-amino-acid chain; its full sequence is Major capsid protein (472 aa).

This sequence belongs to the phi29 phage major capsid protein family.

It is found in the virion. In terms of biological role, assembles to form a prolate capsid of about 45x54 nm, with a T=3, Q=5 symmetry. The protein is Major capsid protein (8) of Bacillus phage GA-1 (Bacteriophage GA-1).